A 420-amino-acid polypeptide reads, in one-letter code: D-inositol 3-phosphate glycosyltransferase (420 aa).

His-13 provides a ligand contact to 1D-myo-inositol 3-phosphate. Residues 19–20 (QP) and Gly-27 contribute to the UDP-N-acetyl-alpha-D-glucosamine site. Residues 24 to 29 (DAGGMN), Lys-82, Tyr-115, Thr-139, and Arg-159 contribute to the 1D-myo-inositol 3-phosphate site. UDP-N-acetyl-alpha-D-glucosamine-binding residues include Arg-233, Lys-238, and Val-294. Residues Phe-303, Arg-304, and Ala-306 each contribute to the Mg(2+) site. UDP-N-acetyl-alpha-D-glucosamine is bound by residues Glu-316 and Glu-324. Thr-330 contributes to the Mg(2+) binding site.

The protein belongs to the glycosyltransferase group 1 family. MshA subfamily. Homodimer.

The enzyme catalyses 1D-myo-inositol 3-phosphate + UDP-N-acetyl-alpha-D-glucosamine = 1D-myo-inositol 2-acetamido-2-deoxy-alpha-D-glucopyranoside 3-phosphate + UDP + H(+). Catalyzes the transfer of a N-acetyl-glucosamine moiety to 1D-myo-inositol 3-phosphate to produce 1D-myo-inositol 2-acetamido-2-deoxy-glucopyranoside 3-phosphate in the mycothiol biosynthesis pathway. This Pseudarthrobacter chlorophenolicus (strain ATCC 700700 / DSM 12829 / CIP 107037 / JCM 12360 / KCTC 9906 / NCIMB 13794 / A6) (Arthrobacter chlorophenolicus) protein is D-inositol 3-phosphate glycosyltransferase.